The sequence spans 136 residues: Protein Tat (136 aa).

A cysteine-rich region spans residues 22 to 37 (CTNCYCKKCCFHCPVC). Residues 38-48 (FTKKALGISYG) are core. Residues 48 to 57 (GRKRRGRKSA) are compositionally biased toward basic residues. A disordered region spans residues 48 to 136 (GRKRRGRKSA…SGSSGSACKH (89 aa)). The short motif at 49 to 55 (RKRRGRK) is the Nuclear localization signal, and RNA-binding (TAR) element. Residues 58-73 (VHSTNNQDPVRQQSLP) are compositionally biased toward polar residues. Residues 104 to 120 (SSVSSGRTSGTSSSGYT) show a composition bias toward low complexity. The segment covering 123–136 (FKTSSGSSGSACKH) has biased composition (polar residues).

Belongs to the lentiviruses Tat family. In terms of assembly, interacts with host CCNT1. Associates with the P-TEFb complex composed at least of Tat, P-TEFb (CDK9 and CCNT1), TAR RNA, RNA Pol II. Interacts with CCNT2; the resulting complex is unable to bind to TAR RNA.

Its subcellular location is the host nucleus. It localises to the host nucleolus. Transcriptional activator that increases RNA Pol II processivity, thereby increasing the level of full-length viral transcripts. Recognizes a hairpin structure at the 5'-LTR of the nascent viral mRNAs referred to as the transactivation responsive RNA element (TAR) and recruits the cyclin T1-CDK9 complex (P-TEFb complex) that will in turn hyperphosphorylate the RNA polymerase II to allow efficient elongation. The CDK9 component of P-TEFb and other Tat-activated kinases hyperphosphorylate the C-terminus of RNA Pol II that becomes stabilized and much more processive. In terms of biological role, extracellular circulating Tat can be endocytosed by surrounding uninfected cells via the binding to several surface receptors. Endosomal low pH allows Tat to cross the endosome membrane to enter the cytosol and eventually further translocate into the nucleus, thereby inducing severe cell dysfunctions ranging from cell activation to cell death. Through. The chain is Protein Tat from Simian immunodeficiency virus (isolate TAN1) (SIV-cpz).